We begin with the raw amino-acid sequence, 334 residues long: Short-chain dehydrogenase/reductase (334 aa).

NADP(+) contacts are provided by L44, K68, D93, N120, and K152. Catalysis depends on proton donor residues S176 and Y205. Y205, K209, and N239 together coordinate NADP(+). Catalysis depends on K209, which acts as the Lowers pKa of active site Tyr.

The protein belongs to the short-chain dehydrogenases/reductases (SDR) family.

Its pathway is mycotoxin biosynthesis. Functionally, short-chain dehydrogenase/reductase; part of the 2 gene clusters that mediate the biosynthesis of fusicoccins, diterpene glucosides that display phytohormone-like activity and function as potent activators of plasma membrane H(+)-ATPases in plants by modifying 14-3-3 proteins and cause the plant disease constriction canker. The first step in the pathway is performed by the fusicoccadiene synthase PaFS that possesses both prenyl transferase and terpene cyclase activity, converting isopentenyl diphosphate and dimethylallyl diphosphate into geranylgeranyl diphosphate (GGDP) and successively converting GGDP into fusicocca-2,10(14)-diene, a precursor for fusicoccin H. The second step is the oxidation at the C-8 position by the cytochrome P450 monooxygenase PaP450-2 to yield fusicocca-2,10(14)-diene-8-beta-ol. The cytochrome P450 monooxygenase PaP450-1 then catalyzes the hydroxylation at the C-16 position to produce fusicocca-2,10(14)-diene-8-beta,16-diol. The dioxygenase fc-dox then catalyzes the 16-oxydation of fusicocca-2,10(14)-diene-8-beta,16-diol to yield an aldehyde (8-beta-hydroxyfusicocca-1,10(14)-dien-16-al). The short-chain dehydrogenase/reductase fc-sdr catalyzes the reduction of the aldehyde to yield fusicocca-1,10(14)-diene-8-beta,16-diol. The next step is the hydroxylation at C-9 performed by the cytochrome P450 monooxygenase PaP450-3 that leads to fusicoccin H aglycon which is glycosylated to fusicoccin H by the O-glycosyltransferase PaGT. Hydroxylation at C-12 by the cytochrome P450 monooxygenase PaP450-4 leads then to the production of fusicoccin Q and is followed by methylation by the O-methyltransferase PaMT to yield fusicoccin P. Fusicoccin P is further converted to fusicoccin J via prenylation by the O-glucose prenyltransferase PaPT. Cytochrome P450 monooxygenase PaP450-5 then performs hydroxylation at C-19 to yield dideacetyl-fusicoccin A which is acetylated to 3'-O-deacetyl-fusicoccin A by the O-acetyltransferase PaAT-2. Finally, a another acetylation by the O-acetyltransferase PaAT-1 yields fusicoccin A. The sequence is that of Short-chain dehydrogenase/reductase from Phomopsis amygdali (Fusicoccum amygdali).